Here is a 268-residue protein sequence, read N- to C-terminus: Bis(5'-nucleosyl)-tetraphosphatase, symmetrical (268 aa).

This sequence belongs to the Ap4A hydrolase family.

It carries out the reaction P(1),P(4)-bis(5'-adenosyl) tetraphosphate + H2O = 2 ADP + 2 H(+). Hydrolyzes diadenosine 5',5'''-P1,P4-tetraphosphate to yield ADP. This Nitrosomonas europaea (strain ATCC 19718 / CIP 103999 / KCTC 2705 / NBRC 14298) protein is Bis(5'-nucleosyl)-tetraphosphatase, symmetrical.